A 324-amino-acid chain; its full sequence is Anthranilate phosphoribosyltransferase (324 aa).

Residues Gly-72, 75–76 (GD), Thr-80, 82–85 (NVST), 99–107 (KHGNVSVTS), and Ser-111 each bind 5-phospho-alpha-D-ribose 1-diphosphate. Residue Gly-72 participates in anthranilate binding. Ser-84 provides a ligand contact to Mg(2+). Asn-102 lines the anthranilate pocket. Arg-157 lines the anthranilate pocket. The Mg(2+) site is built by Asp-215 and Glu-216.

Belongs to the anthranilate phosphoribosyltransferase family. In terms of assembly, homodimer. Mg(2+) is required as a cofactor.

The enzyme catalyses N-(5-phospho-beta-D-ribosyl)anthranilate + diphosphate = 5-phospho-alpha-D-ribose 1-diphosphate + anthranilate. The protein operates within amino-acid biosynthesis; L-tryptophan biosynthesis; L-tryptophan from chorismate: step 2/5. In terms of biological role, catalyzes the transfer of the phosphoribosyl group of 5-phosphorylribose-1-pyrophosphate (PRPP) to anthranilate to yield N-(5'-phosphoribosyl)-anthranilate (PRA). This chain is Anthranilate phosphoribosyltransferase, found in Pyrococcus furiosus (strain ATCC 43587 / DSM 3638 / JCM 8422 / Vc1).